Reading from the N-terminus, the 658-residue chain is Pro-secreted protein ORF2 (658 aa).

Residues 1–19 (MRSRALLFLLFVLLPMLPA) form the signal peptide. Positions 62-124 (SDIPAAAGTG…PDTAPVPDAD (63 aa)) are disordered. Positions 91–122 (RPAASTRRRPAPAGASPLTAVAPAPDTAPVPD) are enriched in low complexity. Residues Asn-135 and Asn-308 are each glycosylated (N-linked (GlcNAc...) asparagine; by host). The particle formation stretch occupies residues 366–392 (IALTLFNLADTLLGGLPTELISSAGGQ). Asn-560 is a glycosylation site (N-linked (GlcNAc...) asparagine; by host). The interval 583-608 (TTNLGSGPVSVSAVGVLAPHSALAAL) is oligomerization.

Belongs to the hepevirus capsid protein family. Homodimer. In terms of assembly, self-assembles to form the capsid. The capsid is dominated by dimers that define the 30 morphological units. Interacts with phosphorylated protein ORF3. Interacts with host TMEM134. Interacts with host ASGR1 and ASGR2; these interactions facilitate infection of host hepatocytes. In terms of processing, cleaved by host protease in the N-terminus. Post-translationally, N-glycosylated. Not N-glycosylated. The C-terminus of the capsid protein ORF2 is truncated in non-enveloped virions shedded in feces, probably due to host proteases.

It is found in the secreted. The protein localises to the virion. It localises to the host cytoplasm. The protein resides in the host endoplasmic reticulum. Its subcellular location is the host Golgi apparatus. It is found in the host cell surface. The protein localises to the host nucleus. Plays a role in the inhibition of host antibody-mediated neutralization without blocking viral cell entry. Its function is as follows. Forms an icosahedral capsid with a T=1 symmetry and a 34 nm diameter. The capsid is composed of 60 copies linked to each other. Binds to the 5' end of the genomic RNA to mediate genome encapsidation. Binds to heparin surface proteoglycans (HSPGs) to mediate viral entry. Additionally, the interactions with host ASGR1 and ASGR2 facilitate viral infection of hepatocytes. Inhibits IFN production by blocking host TBK1-induced IRF3 phosphorylation. The nuclear form probably modulates host gene expression. This Bandicota bengalensis (lesser bandicoot rat) protein is Pro-secreted protein ORF2.